Consider the following 331-residue polypeptide: WW domain-containing protein C2F3.14c (331 aa).

Positions 1 to 184 (MSSSKDCKAT…TNENQAQPSI (184 aa)) are disordered. Positions 9–22 (ATSNVDQTIPASNV) are enriched in polar residues. The span at 23-41 (NSGDFISSNTSSSNSENSN) shows a compositional bias: low complexity. Residues 57 to 89 (SFISENTPKNTFESTQTYENLESISKNEPTSEA) are compositionally biased toward polar residues. Positions 105 to 145 (REPPLPNEPVPEEPLPGEPPLPDEPVPEEPLPGEPPLPNEP) are enriched in pro residues. The segment covering 158-184 (SDETVSETSKNDTSNSPTNENQAQPSI) has biased composition (polar residues). The WW domain occupies 187-220 (SEGHRIAAIWDPSQQAYYFWDTLTNTTSWNNPLE). The interval 290–309 (YTRKEMEQMKRRTKEKKEMK) is disordered. Residues 292–309 (RKEMEQMKRRTKEKKEMK) show a composition bias toward basic and acidic residues.

Its subcellular location is the nucleus. This is WW domain-containing protein C2F3.14c from Schizosaccharomyces pombe (strain 972 / ATCC 24843) (Fission yeast).